Reading from the N-terminus, the 352-residue chain is Homocitrate synthase, omega subunit (352 aa).

Belongs to the alpha-IPM synthase/homocitrate synthase family. In terms of assembly, heterodimer of an alpha and an omega chain.

It catalyses the reaction acetyl-CoA + 2-oxoglutarate + H2O = (2R)-homocitrate + CoA + H(+). Its function is as follows. This protein is a Fe-Mo-cofactor biosynthetic component. This chain is Homocitrate synthase, omega subunit (nifV-OMEGA), found in Clostridium pasteurianum.